The sequence spans 517 residues: Aldehyde dehydrogenase, mitochondrial (517 aa).

A mitochondrion-targeting transit peptide spans 1–17 (MLRAAARFGPRLGRRLL). The SIFI-degron motif lies at 9 to 24 (GPRLGRRLLSAAATQA). Lysine 52, lysine 73, lysine 78, and lysine 159 each carry N6-acetyllysine. 262–267 (GSTEIG) lines the NAD(+) pocket. The active-site Proton acceptor is the glutamate 285. Catalysis depends on cysteine 319, which acts as the Nucleophile. N6-acetyllysine is present on residues lysine 368, lysine 383, lysine 426, lysine 428, and lysine 451.

It belongs to the aldehyde dehydrogenase family. Homotetramer. In terms of processing, in response to mitochondrial stress, the precursor protein is ubiquitinated by the SIFI complex in the cytoplasm before mitochondrial import, leading to its degradation. Within the SIFI complex, UBR4 initiates ubiquitin chain that are further elongated or branched by KCMF1.

It is found in the mitochondrion matrix. The enzyme catalyses an aldehyde + NAD(+) + H2O = a carboxylate + NADH + 2 H(+). Its pathway is alcohol metabolism; ethanol degradation; acetate from ethanol: step 2/2. Required for clearance of cellular formaldehyde, a cytotoxic and carcinogenic metabolite that induces DNA damage. The protein is Aldehyde dehydrogenase, mitochondrial (ALDH2) of Homo sapiens (Human).